Here is a 453-residue protein sequence, read N- to C-terminus: TATA box-binding protein-associated factor RNA polymerase I subunit A (453 aa).

In terms of assembly, component of the transcription factor SL1/TIF-IB complex, composed of TBP and at least TAF1A, TAF1B, TAF1C and TAF1D. In the complex interacts directly with TBP, TAF1A and TAF1B. Interaction of the SL1/TIF-IB subunits with TBP excludes interaction of TBP with the transcription factor IID (TFIID) subunits. Interacts with UBFT. Interacts with CEBPA (isoform 1 and isoform 4). Part of Pol I pre-initiation complex (PIC), in which Pol I core assembles with RRN3 and promoter-bound UTBF and SL1/TIF-IB complex.

The protein resides in the nucleus. It localises to the nucleolus. Component of the transcription factor SL1/TIF-IB complex, which is involved in the assembly of the PIC (pre-initiation complex) during RNA polymerase I-dependent transcription. The rate of PIC formation probably is primarily dependent on the rate of association of SL1/TIF-IB with the rDNA promoter. SL1/TIF-IB is involved in stabilization of nucleolar transcription factor 1/UBTF on rDNA. Formation of SL1/TIF-IB excludes the association of TBP with TFIID subunits. The sequence is that of TATA box-binding protein-associated factor RNA polymerase I subunit A (Taf1a) from Mus musculus (Mouse).